A 181-amino-acid chain; its full sequence is NAD(P)H-quinone oxidoreductase subunit I, chloroplastic (181 aa).

2 consecutive 4Fe-4S ferredoxin-type domains span residues 52 to 81 (GRIH…VDWE) and 92 to 121 (KSYS…MTEE). [4Fe-4S] cluster-binding residues include cysteine 61, cysteine 64, cysteine 67, cysteine 71, cysteine 101, cysteine 104, cysteine 107, and cysteine 111.

This sequence belongs to the complex I 23 kDa subunit family. In terms of assembly, NDH is composed of at least 16 different subunits, 5 of which are encoded in the nucleus. Requires [4Fe-4S] cluster as cofactor.

It localises to the plastid. Its subcellular location is the chloroplast thylakoid membrane. It catalyses the reaction a plastoquinone + NADH + (n+1) H(+)(in) = a plastoquinol + NAD(+) + n H(+)(out). The enzyme catalyses a plastoquinone + NADPH + (n+1) H(+)(in) = a plastoquinol + NADP(+) + n H(+)(out). Its function is as follows. NDH shuttles electrons from NAD(P)H:plastoquinone, via FMN and iron-sulfur (Fe-S) centers, to quinones in the photosynthetic chain and possibly in a chloroplast respiratory chain. The immediate electron acceptor for the enzyme in this species is believed to be plastoquinone. Couples the redox reaction to proton translocation, and thus conserves the redox energy in a proton gradient. This chain is NAD(P)H-quinone oxidoreductase subunit I, chloroplastic, found in Zygnema circumcarinatum (Green alga).